We begin with the raw amino-acid sequence, 444 residues long: Acyl-CoA 6-desaturase (444 aa).

Over 1–130 (MGKGGNQGEG…EDMNLFKTNH (130 aa)) the chain is Cytoplasmic. A Cytochrome b5 heme-binding domain is found at 18–95 (MPTFRWEEIQ…LKPLLIGELA (78 aa)). Residues 131 to 151 (LFFFLLLSHIIVMESIAWFIL) form a helical membrane-spanning segment. The Lumenal portion of the chain corresponds to 152-157 (SYFGNG). Residues 158–178 (WIPTVITAFVLATSQAQAGWL) traverse the membrane as a helical segment. Over 179-264 (QHDYGHLSVY…KYLPYNHQHE (86 aa)) the chain is Cytoplasmic. The Histidine box-1 motif lies at 180-184 (HDYGH). Residues 217–221 (HFQHH) carry the Histidine box-2 motif. Residues 265–285 (YFFLIGPPLLIPMYFQYQIIM) form a helical membrane-spanning segment. Topologically, residues 286–305 (TMIRRRDWVDLAWAISYYAR) are lumenal. Residues 306-326 (FFYTYIPFYGILGALVFLNFI) form a helical membrane-spanning segment. The Cytoplasmic portion of the chain corresponds to 327–444 (RFLESHWFVW…ELWLDAYLHK (118 aa)). The short motif at 382 to 386 (QIEHH) is the Histidine box-3 element.

This sequence belongs to the fatty acid desaturase type 1 family. In terms of tissue distribution, expressed in the liver and brain (at protein level). Highest activity is found in the liver and adrenals followed by the testes and other organs, absent in adipose tissue.

The protein localises to the endoplasmic reticulum membrane. It is found in the microsome membrane. It catalyses the reaction (9Z,12Z)-octadecadienoyl-CoA + 2 Fe(II)-[cytochrome b5] + O2 + 2 H(+) = (6Z,9Z,12Z)-octadecatrienoyl-CoA + 2 Fe(III)-[cytochrome b5] + 2 H2O. The enzyme catalyses (9Z,12Z,15Z)-octadecatrienoyl-CoA + 2 Fe(II)-[cytochrome b5] + O2 + 2 H(+) = (6Z,9Z,12Z,15Z)-octadecatetraenoyl-CoA + 2 Fe(III)-[cytochrome b5] + 2 H2O. The catalysed reaction is (9Z,12Z,15Z,18Z,21Z)-tetracosapentaenoyl-CoA + 2 Fe(II)-[cytochrome b5] + O2 + 2 H(+) = (6Z,9Z,12Z,15Z,18Z,21Z)-tetracosahexaenoyl-CoA + 2 Fe(III)-[cytochrome b5] + 2 H2O. It carries out the reaction (11E)-octadecenoyl-CoA + 2 Fe(II)-[cytochrome b5] + O2 + 2 H(+) = (6Z,11E)-octadecadienoyl-CoA + 2 Fe(III)-[cytochrome b5] + 2 H2O. It catalyses the reaction (11Z,14Z)-eicosadienoyl-CoA + 2 Fe(II)-[cytochrome b5] + O2 + 2 H(+) = (8Z,11Z,14Z)-eicosatrienoyl-CoA + 2 Fe(III)-[cytochrome b5] + 2 H2O. The enzyme catalyses (11Z,14Z,17Z)-eicosatrienoyl-CoA + 2 Fe(II)-[cytochrome b5] + O2 + 2 H(+) = (8Z,11Z,14Z,17Z)-eicosatetraenoyl-CoA + 2 Fe(III)-[cytochrome b5] + 2 H2O. It participates in lipid metabolism; polyunsaturated fatty acid biosynthesis. Its function is as follows. Involved in the biosynthesis of highly unsaturated fatty acids (HUFA) from the essential polyunsaturated fatty acids (PUFA) linoleic acid (LA) (18:2n-6) and alpha-linolenic acid (ALA) (18:3n-3) precursors, acting as a fatty acyl-coenzyme A (CoA) desaturase that introduces a cis double bond at carbon 6 of the fatty acyl chain. Catalyzes the first and rate limiting step in this pathway which is the desaturation of LA (18:2n-6) and ALA (18:3n-3) into gamma-linoleate (GLA) (18:3n-6) and stearidonate (18:4n-3), respectively. Subsequently, in the biosynthetic pathway of HUFA n-3 series, it desaturates tetracosapentaenoate (24:5n-3) to tetracosahexaenoate (24:6n-3), which is then converted to docosahexaenoate (DHA)(22:6n-3), an important lipid for nervous system function. It can also desaturate (11E)-octadecenoate (trans-vaccenoate) at carbon 6 generating (6Z,11E)-octadecadienoate. In addition to Delta-6 activity, this enzyme exhibits Delta-8 activity with slight biases toward n-3 fatty acyl-CoA substrates. The sequence is that of Acyl-CoA 6-desaturase (Fads2) from Rattus norvegicus (Rat).